The primary structure comprises 156 residues: Anaerobic nitrite reductase HB2 (156 aa).

The 150-residue stretch at Gly-2–His-151 folds into the Globin domain. A Homodimerization motif is present at residues Glu-35–Val-39. The heme b site is built by Ser-45, Lys-59, His-63, and His-98. Positions Asp-105 to Arg-117 match the Homodimerization motif.

This sequence belongs to the plant globin family. As to quaternary structure, homodimer. Heme b serves as cofactor.

It is found in the cytoplasm. The protein resides in the nucleus. It carries out the reaction Fe(III)-heme b-[protein] + nitric oxide + H2O = Fe(II)-heme b-[protein] + nitrite + 2 H(+). Functionally, phytoglobin that reduces nitrite to nitric oxide (NO) under anoxic conditions (e.g. during flooding or in waterlogged soil). May not function as an oxygen storage or transport protein. Has an unusually high affinity for O(2) through an hexacoordinate heme iron because of a very low dissociation constant. The protein is Anaerobic nitrite reductase HB2 of Solanum lycopersicum (Tomato).